Here is an 892-residue protein sequence, read N- to C-terminus: Histone deacetylase 4 (892 aa).

Residues 145-225 form a disordered region; it reads NGNLSNLSVP…MSNVNGHDNS (81 aa). 2 stretches are compositionally biased toward polar residues: residues 171–192 and 208–222; these read SAPT…ISQL and ESNS…VNGH. A histone deacetylase region spans residues 481-822; that stretch reads STGLGYDPLM…VQALIGESDD (342 aa). The active site involves histidine 628.

This sequence belongs to the histone deacetylase family. HD type 2 subfamily.

It is found in the nucleus. It catalyses the reaction N(6)-acetyl-L-lysyl-[histone] + H2O = L-lysyl-[histone] + acetate. Functionally, responsible for the deacetylation of lysine residues on the N-terminal part of the core histones (H2A, H2B, H3 and H4). Histone deacetylation gives a tag for epigenetic repression and plays an important role in transcriptional regulation, cell cycle progression and developmental events. Histone deacetylases act via the formation of large multiprotein complexes. In Caenorhabditis briggsae, this protein is Histone deacetylase 4 (hda-4).